A 627-amino-acid polypeptide reads, in one-letter code: tRNA uridine 5-carboxymethylaminomethyl modification enzyme MnmG (627 aa).

FAD-binding positions include Gly13–Gly18, Val125, and Ser180. Position 274–288 (Gly274–Phe288) interacts with NAD(+). Residue Gln371 coordinates FAD.

It belongs to the MnmG family. In terms of assembly, homodimer. Heterotetramer of two MnmE and two MnmG subunits. FAD serves as cofactor.

The protein resides in the cytoplasm. In terms of biological role, NAD-binding protein involved in the addition of a carboxymethylaminomethyl (cmnm) group at the wobble position (U34) of certain tRNAs, forming tRNA-cmnm(5)s(2)U34. The polypeptide is tRNA uridine 5-carboxymethylaminomethyl modification enzyme MnmG (Francisella tularensis subsp. tularensis (strain FSC 198)).